The chain runs to 166 residues: ATP synthase subunit b (166 aa).

Residues 15 to 37 (TLYYLLIFAALLLLVKHFAWGPV) form a helical membrane-spanning segment.

This sequence belongs to the ATPase B chain family. F-type ATPases have 2 components, F(1) - the catalytic core - and F(0) - the membrane proton channel. F(1) has five subunits: alpha(3), beta(3), gamma(1), delta(1), epsilon(1). F(0) has three main subunits: a(1), b(2) and c(10-14). The alpha and beta chains form an alternating ring which encloses part of the gamma chain. F(1) is attached to F(0) by a central stalk formed by the gamma and epsilon chains, while a peripheral stalk is formed by the delta and b chains.

It localises to the cell membrane. Functionally, f(1)F(0) ATP synthase produces ATP from ADP in the presence of a proton or sodium gradient. F-type ATPases consist of two structural domains, F(1) containing the extramembraneous catalytic core and F(0) containing the membrane proton channel, linked together by a central stalk and a peripheral stalk. During catalysis, ATP synthesis in the catalytic domain of F(1) is coupled via a rotary mechanism of the central stalk subunits to proton translocation. Component of the F(0) channel, it forms part of the peripheral stalk, linking F(1) to F(0). This Lactobacillus johnsonii (strain CNCM I-12250 / La1 / NCC 533) protein is ATP synthase subunit b.